The chain runs to 485 residues: Glutamate--tRNA ligase (485 aa).

Positions 11-21 (PSPTGHLHIGN) match the 'HIGH' region motif. The 'KMSKS' region motif lies at 252–256 (KLSKR). Position 255 (K255) interacts with ATP.

It belongs to the class-I aminoacyl-tRNA synthetase family. Glutamate--tRNA ligase type 1 subfamily. Monomer.

It localises to the cytoplasm. It catalyses the reaction tRNA(Glu) + L-glutamate + ATP = L-glutamyl-tRNA(Glu) + AMP + diphosphate. Its function is as follows. Catalyzes the attachment of glutamate to tRNA(Glu) in a two-step reaction: glutamate is first activated by ATP to form Glu-AMP and then transferred to the acceptor end of tRNA(Glu). The chain is Glutamate--tRNA ligase from Bacillus cytotoxicus (strain DSM 22905 / CIP 110041 / 391-98 / NVH 391-98).